We begin with the raw amino-acid sequence, 429 residues long: Zinc finger protein 275 (429 aa).

The tract at residues 31–95 (VSDPSPNTDP…DGKRGSPQNL (65 aa)) is disordered. Residues 34–51 (PSPNTDPAKYSESTSATR) show a composition bias toward polar residues. Position 76 is a phosphoserine (Ser76). Residues 79 to 89 (FRQHGDSDGKR) are compositionally biased toward basic and acidic residues. C2H2-type zinc fingers lie at residues 101 to 123 (FACK…QRVH) and 129 to 151 (WECG…RKSH). The disordered stretch occupies residues 149 to 176 (KSHVAAEPQPGPSRALENAAEKREQMER). Residues 167-176 (AAEKREQMER) are compositionally biased toward basic and acidic residues. 9 consecutive C2H2-type zinc fingers follow at residues 181–203 (FECE…LRVH), 209–231 (FDCE…QKLH), 237–259 (FACK…QRMH), 265–287 (FDCD…QRIH), 293–315 (YGCP…RRIH), 321–343 (YACG…ARIH), 349–371 (YACG…RRIH), 377–399 (YECD…RRIH), and 405–427 (CECS…QPTH).

Belongs to the krueppel C2H2-type zinc-finger protein family.

Its subcellular location is the nucleus. Functionally, may be involved in transcriptional regulation. This is Zinc finger protein 275 (ZNF275) from Homo sapiens (Human).